Here is a 253-residue protein sequence, read N- to C-terminus: Ubiquinone biosynthesis O-methyltransferase (253 aa).

Residues R47, G78, D99, and M141 each contribute to the S-adenosyl-L-methionine site.

The protein belongs to the methyltransferase superfamily. UbiG/COQ3 family.

It catalyses the reaction a 3-demethylubiquinol + S-adenosyl-L-methionine = a ubiquinol + S-adenosyl-L-homocysteine + H(+). It carries out the reaction a 3-(all-trans-polyprenyl)benzene-1,2-diol + S-adenosyl-L-methionine = a 2-methoxy-6-(all-trans-polyprenyl)phenol + S-adenosyl-L-homocysteine + H(+). It participates in cofactor biosynthesis; ubiquinone biosynthesis. Functionally, O-methyltransferase that catalyzes the 2 O-methylation steps in the ubiquinone biosynthetic pathway. The protein is Ubiquinone biosynthesis O-methyltransferase of Rhodopseudomonas palustris (strain BisB5).